Consider the following 100-residue polypeptide: Integration host factor subunit alpha (100 aa).

Belongs to the bacterial histone-like protein family. Heterodimer of an alpha and a beta chain.

In terms of biological role, this protein is one of the two subunits of integration host factor, a specific DNA-binding protein that functions in genetic recombination as well as in transcriptional and translational control. The sequence is that of Integration host factor subunit alpha from Caulobacter vibrioides (strain ATCC 19089 / CIP 103742 / CB 15) (Caulobacter crescentus).